The following is a 373-amino-acid chain: tRNA-specific 2-thiouridylase MnmA (373 aa).

Residues 12 to 19 and methionine 38 contribute to the ATP site; that span reads GMSGGVDS. The segment at 98 to 100 is interaction with target base in tRNA; that stretch reads NPD. Catalysis depends on cysteine 103, which acts as the Nucleophile. A disulfide bridge connects residues cysteine 103 and cysteine 200. Position 127 (glycine 127) interacts with ATP. The tract at residues 150 to 152 is interaction with tRNA; the sequence is KDQ. The Cysteine persulfide intermediate role is filled by cysteine 200. Positions 312–313 are interaction with tRNA; that stretch reads RY.

The protein belongs to the MnmA/TRMU family.

Its subcellular location is the cytoplasm. It catalyses the reaction S-sulfanyl-L-cysteinyl-[protein] + uridine(34) in tRNA + AH2 + ATP = 2-thiouridine(34) in tRNA + L-cysteinyl-[protein] + A + AMP + diphosphate + H(+). Its function is as follows. Catalyzes the 2-thiolation of uridine at the wobble position (U34) of tRNA, leading to the formation of s(2)U34. This is tRNA-specific 2-thiouridylase MnmA from Streptococcus pneumoniae (strain ATCC 700669 / Spain 23F-1).